The chain runs to 243 residues: Proteasome subunit beta (243 aa).

A disordered region spans residues 1-46 (MFNPNNGSEFARNRARLDDTPNPYEPEVGSLPEGDRSQAGSDTVNK). A propeptide spans 1–48 (MFNPNNGSEFARNRARLDDTPNPYEPEVGSLPEGDRSQAGSDTVNKTG) (removed in mature form; by autocatalysis). T49 serves as the catalytic Nucleophile.

It belongs to the peptidase T1B family. In terms of assembly, the 20S proteasome core is composed of 14 alpha and 14 beta subunits that assemble into four stacked heptameric rings, resulting in a barrel-shaped structure. The two inner rings, each composed of seven catalytic beta subunits, are sandwiched by two outer rings, each composed of seven alpha subunits. The catalytic chamber with the active sites is on the inside of the barrel. Has a gated structure, the ends of the cylinder being occluded by the N-termini of the alpha-subunits. Is capped at one or both ends by the proteasome regulatory ATPase, PAN.

It localises to the cytoplasm. It carries out the reaction Cleavage of peptide bonds with very broad specificity.. The formation of the proteasomal ATPase PAN-20S proteasome complex, via the docking of the C-termini of PAN into the intersubunit pockets in the alpha-rings, triggers opening of the gate for substrate entry. Interconversion between the open-gate and close-gate conformations leads to a dynamic regulation of the 20S proteasome proteolysis activity. In terms of biological role, component of the proteasome core, a large protease complex with broad specificity involved in protein degradation. The protein is Proteasome subunit beta of Halobacterium salinarum (strain ATCC 29341 / DSM 671 / R1).